Reading from the N-terminus, the 273-residue chain is MARHKTSDIMLPAAWRIPWDRQLDQHMARVIKAMAQINFASNMHHNLFMFTTREGLLHRNRMLSSSTTQELQSTQPIAVRQQPRAARACGFGDRDRRVIDPPPIVQLRIDGPGLSEEERRAYLRYPNYVMNCSIWDESGTRDASYMPDEYNHQRRLMGSLVGTPFVGDDDQNQEGCFFCFSDLSCRTPGAFRLKFTLIMIDPARASILRHFPTLTEIKTDIFQVYSAKEFPGMVASSSLAKKLKEQGCIISIKKGNERARPRGADGRSDDEDD.

Over residues 66 to 75 (STTQELQSTQ) the composition is skewed to low complexity. The tract at residues 66 to 86 (STTQELQSTQPIAVRQQPRAA) is disordered. Positions 70–253 (ELQSTQPIAV…KEQGCIISIK (184 aa)) constitute a Velvet domain. A Nuclear localization signal motif is present at residues 211 to 218 (FPTLTEIK). Over residues 254–267 (KGNERARPRGADGR) the composition is skewed to basic and acidic residues. The disordered stretch occupies residues 254–273 (KGNERARPRGADGRSDDEDD).

This sequence belongs to the velvet family. VosA subfamily. In terms of assembly, forms a heterodimeric complex with velB; the formation of the velB-vosA complex is light-dependent.

It localises to the nucleus. In terms of biological role, component of the velB-vosA heterodimeric complex that plays a dual role in activating genes associated with spore maturation and repressing certain development-associated genes. The complex binds DNA through the DNA-binding domain of vosA that recognizes an 11-nucleotide consensus sequence 5'-CTGGCCGCGGC-3' consisting of two motifs in the promoters of key developmental regulatory genes. Positively regulates the expression of wetA and represses abaA and brlA. Acts as a crucial regulator of both conidiation capacity and conidial quality. Responsible for the synthesis and accumulation of intracellular trehalose. In Beauveria bassiana (strain ARSEF 2860) (White muscardine disease fungus), this protein is Spore development regulator vosA.